We begin with the raw amino-acid sequence, 1088 residues long: Protein unc-13 homolog D (1088 aa).

Residues V26 to H46 form a disordered region. The 148-residue stretch at Q92 to Q239 folds into the C2 1 domain. Residues D127 and D133 each coordinate Ca(2+). The residue at position 150 (S150) is a Phosphoserine. 2 residues coordinate Ca(2+): D206 and D208. Residues D240–A543 are interaction with RAB27A. Residues F557 to I675 form the MHD1 domain. The MHD2 domain maps to E786–Y893. Positions R908–G1033 constitute a C2 2 domain. Residues L938, D939, D945, D1003, D1005, and D1011 each coordinate Ca(2+).

Belongs to the unc-13 family. As to quaternary structure, interacts with RAB27A and DOC2A. Interacts with RhoG; the interaction increases RhoG affinity to the membrane lipids, targets Unc13d to membrane lipids and facilitates cytotoxic granule (CG) docking to the plasma membrane. Requires Ca(2+) as cofactor. Expressed in lung bronchial epithelium goblet/mucous cells. Also expressed in spleen and testis. Expressed at very low levels in heart muscle, kidney, liver, brain and skeletal muscle.

It is found in the cytoplasm. Its subcellular location is the membrane. The protein localises to the late endosome. It localises to the recycling endosome. The protein resides in the lysosome. Plays a role in cytotoxic granule exocytosis in lymphocytes. Required for both granule maturation and granule docking and priming at the immunologic synapse. Regulates assembly of recycling and late endosomal structures, leading to the formation of an endosomal exocytic compartment that fuses with perforin-containing granules at the immunologic synapse and licences them for exocytosis. Regulates Ca(2+)-dependent secretory lysosome exocytosis in mast cells. The sequence is that of Protein unc-13 homolog D (Unc13d) from Rattus norvegicus (Rat).